Here is a 322-residue protein sequence, read N- to C-terminus: MSLRDALKTPSSEITDEAVYRDRRRLLQLFALTPALSVAGCAEADPPPPPKTVVTPAQARSGFRTAEELTRLEDVTSYNNFYEFGTDKTDPSKAAKTLKLSPWSVKVSGECEKPGSLSLDELLKGISAEERIYRLRCVEGWSMVIPWTGVPLGEVLKRFAPTSRAKYVAFTTLADPQQMPGVRYRSINWPYREGLRIDEAMHPLTLLATGLYGKPLPQQNGAPLRLVVPWKYGFKSIKSIVEIRFVEKMPETAWHDLQPSEYGFFSNVNPAVDHPRWSQKTERRIAGTASKLFAERIATKPFNGYADQVASLYAGMDLKKWF.

The tat-type signal signal peptide spans 1–59; it reads MSLRDALKTPSSEITDEAVYRDRRRLLQLFALTPALSVAGCAEADPPPPPKTVVTPAQA. Mo-molybdopterin contacts are provided by residues asparagine 79, 82-83, cysteine 137, threonine 172, asparagine 220, arginine 225, and 236-238; these read YE and SIK.

It belongs to the MsrP family. Heterodimer of a catalytic subunit (MsrP) and a heme-binding subunit (MsrQ). Mo-molybdopterin is required as a cofactor. Predicted to be exported by the Tat system. The position of the signal peptide cleavage has not been experimentally proven.

It is found in the periplasm. It carries out the reaction L-methionyl-[protein] + a quinone + H2O = L-methionyl-(S)-S-oxide-[protein] + a quinol. The enzyme catalyses L-methionyl-[protein] + a quinone + H2O = L-methionyl-(R)-S-oxide-[protein] + a quinol. In terms of biological role, part of the MsrPQ system that repairs oxidized periplasmic proteins containing methionine sulfoxide residues (Met-O), using respiratory chain electrons. Thus protects these proteins from oxidative-stress damage caused by reactive species of oxygen and chlorine generated by the host defense mechanisms. MsrPQ is essential for the maintenance of envelope integrity under bleach stress, rescuing a wide series of structurally unrelated periplasmic proteins from methionine oxidation. The catalytic subunit MsrP is non-stereospecific, being able to reduce both (R-) and (S-) diastereoisomers of methionine sulfoxide. This chain is Protein-methionine-sulfoxide reductase catalytic subunit MsrP, found in Xanthomonas campestris pv. campestris (strain ATCC 33913 / DSM 3586 / NCPPB 528 / LMG 568 / P 25).